A 276-amino-acid chain; its full sequence is NADH-cytochrome b5 reductase 2 (276 aa).

An FAD-binding FR-type domain is found at 15 to 127 (EAKYPLPLIE…RGPTGRLFYN (113 aa)). K17 bears the N6-acetyllysine mark. Y18 is subject to Phosphotyrosine. FAD-binding positions include 107–137 (ENMKIGDTILFRGPTGRLFYNEPGTLLIKAN) and 146–181 (LVHHLGMIAGGTGITPMLQLIRHITKDTSDETRMSL).

It belongs to the flavoprotein pyridine nucleotide cytochrome reductase family. FAD serves as cofactor.

It catalyses the reaction 2 Fe(III)-[cytochrome b5] + NADH = 2 Fe(II)-[cytochrome b5] + NAD(+) + H(+). In terms of biological role, NADH-cytochrome b5 reductases are involved in desaturation and elongation of fatty acids, cholesterol biosynthesis, drug metabolism, and, in erythrocyte, methemoglobin reduction. Responsible for NADH-dependent lucigenin chemiluminescence in spermatozoa by reducing both lucigenin and 2-[4-iodophenyl]-3-[4-nitrophenyl]-5-[2,4-disulfophenyl]-2H tetrazolium monosodium salt (WST-1). The protein is NADH-cytochrome b5 reductase 2 (Cyb5r2) of Mus musculus (Mouse).